Here is a 243-residue protein sequence, read N- to C-terminus: Peptidyl-tRNA hydrolase (243 aa).

TRNA is bound at residue Y14. The Proton acceptor role is filled by H19. Residues Y64, N66, and N112 each contribute to the tRNA site. A compositionally biased stretch (basic and acidic residues) spans 190-207; the sequence is KAEEEKPRKEGKDGEKKP. The tract at residues 190–243 is disordered; sequence KAEEEKPRKEGKDGEKKPAGQSHIRQARSSNQPKLPATGPMAEMLKKMFGNKGE. Over residues 212 to 222 the composition is skewed to polar residues; it reads HIRQARSSNQP.

This sequence belongs to the PTH family. In terms of assembly, monomer.

It localises to the cytoplasm. The catalysed reaction is an N-acyl-L-alpha-aminoacyl-tRNA + H2O = an N-acyl-L-amino acid + a tRNA + H(+). Functionally, hydrolyzes ribosome-free peptidyl-tRNAs (with 1 or more amino acids incorporated), which drop off the ribosome during protein synthesis, or as a result of ribosome stalling. In terms of biological role, catalyzes the release of premature peptidyl moieties from peptidyl-tRNA molecules trapped in stalled 50S ribosomal subunits, and thus maintains levels of free tRNAs and 50S ribosomes. This is Peptidyl-tRNA hydrolase from Rhizobium etli (strain CIAT 652).